Reading from the N-terminus, the 366-residue chain is Alcohol dehydrogenase (366 aa).

Zn(2+)-binding residues include cysteine 41, histidine 62, glutamate 63, and aspartate 167.

It belongs to the zinc-containing alcohol dehydrogenase family. As to quaternary structure, homotetramer. Zn(2+) serves as cofactor.

The catalysed reaction is a primary alcohol + NAD(+) = an aldehyde + NADH + H(+). The enzyme catalyses a secondary alcohol + NAD(+) = a ketone + NADH + H(+). It catalyses the reaction (R,R)-butane-2,3-diol + NAD(+) = (R)-acetoin + NADH + H(+). It carries out the reaction an aldehyde + NAD(+) + H2O = a carboxylate + NADH + 2 H(+). Multifunctional alcohol dehydrogenase exhibiting NAD(+)-dependent dehydrogenase activities for 2,3-butanediol, ethanol and acetaldehyde, and reductase activities for acetoin (NADH-dependent), and diacetyl and acetaldehyde (independently of whether NADH or NADPH is the reductant). The rate of oxidation of 2,3-butanediol is much higher than for the oxidation of ethanol. Has acetaldehyde dehydrogenase activity leading to acetate formation. May function in the release of excess reducing power in the absence of exogenous hydrogen acceptors such as oxygen. The protein is Alcohol dehydrogenase (adh) of Cupriavidus necator (Alcaligenes eutrophus).